Here is a 347-residue protein sequence, read N- to C-terminus: Glucose 1-dehydrogenase (347 aa).

Residue C39 coordinates Zn(2+). T41 contributes to the substrate binding site. 2 residues coordinate Zn(2+): H64 and E65. The substrate site is built by E110 and E146. E146 is a Zn(2+) binding site. Residues 178 to 181 (AGPV), 260 to 262 (LGV), and 289 to 291 (SVN) each bind NADP(+). N291 serves as a coordination point for substrate.

Belongs to the zinc-containing alcohol dehydrogenase family. Glucose 1-dehydrogenase subfamily. Homodimer. Zn(2+) is required as a cofactor.

It catalyses the reaction D-glucose + NAD(+) = D-glucono-1,5-lactone + NADH + H(+). The catalysed reaction is D-glucose + NADP(+) = D-glucono-1,5-lactone + NADPH + H(+). Functionally, catalyzes the NAD(P)(+)-dependent oxidation of D-glucose to D-gluconate via gluconolactone. To a lesser extent, is also active with xylose as substrate, but mannose, arabinose, galactose, fructose 6-phosphate, glucose 6-phosphate, glycerinaldehyde 3-phosphate, ribose, sorbitol, ethanol, erythritol, or lactose are not oxidized by the enzyme. Can utilize both NAD(+) and NADP(+) as electron acceptor, with a marked preference for NADP(+). Is involved in the degradation of glucose through a non-phosphorylative variant of the Entner-Doudoroff pathway. In Thermoproteus tenax (strain ATCC 35583 / DSM 2078 / JCM 9277 / NBRC 100435 / Kra 1), this protein is Glucose 1-dehydrogenase (gdh).